Here is a 293-residue protein sequence, read N- to C-terminus: Triacylglycerol lipase (293 aa).

An AB hydrolase-1 domain is found at 10–206 (PILLVHGLFG…YYSWSGIIKG (197 aa)). Leu-17 lines the substrate pocket. Ser-83 serves as the catalytic Nucleophile. Position 84 (Gln-84) interacts with substrate. Position 217 (Asp-217) interacts with Ca(2+). Catalysis depends on charge relay system residues Asp-238 and His-260. Residues Asp-262, His-266, and Arg-269 each contribute to the Ca(2+) site.

It belongs to the AB hydrolase superfamily. Pseudomonas lipase family. It depends on Ca(2+) as a cofactor.

The protein resides in the secreted. It carries out the reaction a triacylglycerol + H2O = a diacylglycerol + a fatty acid + H(+). In terms of biological role, catalyzes the hydrolysis of triacylglycerols, with the highest activity with tributyrin (C4), lower activity with tricaprylin (C8), and much lower activity with triacetin (C2), trilaurin (C12) and triolein (C18). In Pseudomonas fragi, this protein is Triacylglycerol lipase (lips).